Consider the following 121-residue polypeptide: Large ribosomal subunit protein uL22 (121 aa).

The protein belongs to the universal ribosomal protein uL22 family. Part of the 50S ribosomal subunit.

This protein binds specifically to 23S rRNA; its binding is stimulated by other ribosomal proteins, e.g. L4, L17, and L20. It is important during the early stages of 50S assembly. It makes multiple contacts with different domains of the 23S rRNA in the assembled 50S subunit and ribosome. Functionally, the globular domain of the protein is located near the polypeptide exit tunnel on the outside of the subunit, while an extended beta-hairpin is found that lines the wall of the exit tunnel in the center of the 70S ribosome. The polypeptide is Large ribosomal subunit protein uL22 (Rickettsia massiliae (strain Mtu5)).